The following is a 256-amino-acid chain: Enolase-phosphatase E1 (256 aa).

Residues aspartate 13 and glutamate 15 each contribute to the Mg(2+) site. Substrate is bound by residues 127–128 (SS) and lysine 175. Position 202 (aspartate 202) interacts with Mg(2+).

This sequence belongs to the HAD-like hydrolase superfamily. MasA/MtnC family. As to quaternary structure, monomer. Mg(2+) serves as cofactor.

The protein resides in the cytoplasm. It localises to the nucleus. The catalysed reaction is 5-methylsulfanyl-2,3-dioxopentyl phosphate + H2O = 1,2-dihydroxy-5-(methylsulfanyl)pent-1-en-3-one + phosphate. It functions in the pathway amino-acid biosynthesis; L-methionine biosynthesis via salvage pathway; L-methionine from S-methyl-5-thio-alpha-D-ribose 1-phosphate: step 3/6. Its pathway is amino-acid biosynthesis; L-methionine biosynthesis via salvage pathway; L-methionine from S-methyl-5-thio-alpha-D-ribose 1-phosphate: step 4/6. In terms of biological role, bifunctional enzyme that catalyzes the enolization of 2,3-diketo-5-methylthiopentyl-1-phosphate (DK-MTP-1-P) into the intermediate 2-hydroxy-3-keto-5-methylthiopentenyl-1-phosphate (HK-MTPenyl-1-P), which is then dephosphorylated to form the acireductone 1,2-dihydroxy-3-keto-5-methylthiopentene (DHK-MTPene). The sequence is that of Enolase-phosphatase E1 (utr4) from Botryotinia fuckeliana (strain B05.10) (Noble rot fungus).